The sequence spans 263 residues: Endonuclease 8 (263 aa).

The Schiff-base intermediate with DNA role is filled by Pro-2. The active-site Proton donor is Glu-3. Residue Lys-53 is the Proton donor; for beta-elimination activity of the active site. DNA contacts are provided by Gln-70, Arg-125, and Asn-169. The FPG-type zinc-finger motif lies at Lys-229 to Lys-263. Arg-253 (proton donor; for delta-elimination activity) is an active-site residue.

Belongs to the FPG family. The cofactor is Zn(2+).

The enzyme catalyses 2'-deoxyribonucleotide-(2'-deoxyribose 5'-phosphate)-2'-deoxyribonucleotide-DNA = a 3'-end 2'-deoxyribonucleotide-(2,3-dehydro-2,3-deoxyribose 5'-phosphate)-DNA + a 5'-end 5'-phospho-2'-deoxyribonucleoside-DNA + H(+). Its function is as follows. Involved in base excision repair of DNA damaged by oxidation or by mutagenic agents. Acts as a DNA glycosylase that recognizes and removes damaged bases. Has a preference for oxidized pyrimidines, such as thymine glycol, 5,6-dihydrouracil and 5,6-dihydrothymine. Has AP (apurinic/apyrimidinic) lyase activity and introduces nicks in the DNA strand. Cleaves the DNA backbone by beta-delta elimination to generate a single-strand break at the site of the removed base with both 3'- and 5'-phosphates. The sequence is that of Endonuclease 8 from Salmonella newport (strain SL254).